Consider the following 209-residue polypeptide: MSKMAEEKVLAAPATVDGGMQSSGDLQASSAAAARVRPVETLLRAAPLGLCVAAMAIMLRNSVTNEYGTVSYSDLGGFKYLVYANGLCAAYSLASAFYIAVPRPATLSRSWVVFLLDQVFTYLILAAGAASAELLYLAYNGDKEVTWSEACGVFGGFCRQARTSVAITFASVACYILLSLISSYRLFSAYDPPQPSLGNKGVEIAAFPR.

Residues 1–38 (MSKMAEEKVLAAPATVDGGMQSSGDLQASSAAAARVRP) lie on the Cytoplasmic side of the membrane. The helical transmembrane segment at 39–59 (VETLLRAAPLGLCVAAMAIML) threads the bilayer. The Extracellular segment spans residues 60-80 (RNSVTNEYGTVSYSDLGGFKY). A helical membrane pass occupies residues 81–101 (LVYANGLCAAYSLASAFYIAV). Residues 102–109 (PRPATLSR) are Cytoplasmic-facing. A helical membrane pass occupies residues 110 to 130 (SWVVFLLDQVFTYLILAAGAA). Residues 131–163 (SAELLYLAYNGDKEVTWSEACGVFGGFCRQART) lie on the Extracellular side of the membrane. Residues 164–184 (SVAITFASVACYILLSLISSY) traverse the membrane as a helical segment. Residues 185–209 (RLFSAYDPPQPSLGNKGVEIAAFPR) are Cytoplasmic-facing.

It belongs to the Casparian strip membrane proteins (CASP) family. Homodimer and heterodimers.

The protein resides in the cell membrane. This is CASP-like protein 2A1 from Oryza sativa subsp. indica (Rice).